Consider the following 101-residue polypeptide: MGTRFLLALCLVLLVLGFEVQGTQLPKQDEPPSPALLSQVQESLSSYWESAKAAAQKLYEKTYLPAVDEKLRDLYSKSTAAMSTYTGIFTDQVLSVLKGEE.

The N-terminal stretch at 1–17 is a signal peptide; the sequence is MGTRFLLALCLVLLVLG. A lipid binding region spans residues 66 to 74; the sequence is AVDEKLRDL. Residues 78 to 101 form a lipoprotein lipase cofactor region; it reads STAAMSTYTGIFTDQVLSVLKGEE.

This sequence belongs to the apolipoprotein C2 family. In terms of processing, proapolipoprotein C-II is synthesized as a sialic acid containing glycoprotein which is subsequently desialylated prior to its proteolytic processing. Proapolipoprotein C-II, the major form found in plasma undergoes proteolytic cleavage of its N-terminal hexapeptide to generate apolipoprotein C-II, which occurs as the minor form in plasma.

The protein resides in the secreted. Its function is as follows. Component of chylomicrons, very low-density lipoproteins (VLDL), low-density lipoproteins (LDL), and high-density lipoproteins (HDL) in plasma. Plays an important role in lipoprotein metabolism as an activator of lipoprotein lipase. Both proapolipoprotein C-II and apolipoprotein C-II can activate lipoprotein lipase. The chain is Apolipoprotein C-II (APOC2) from Chlorocebus sabaeus (Green monkey).